The sequence spans 1368 residues: DNA-directed RNA polymerase subunit beta (1368 aa).

Belongs to the RNA polymerase beta chain family. In terms of assembly, the RNAP catalytic core consists of 2 alpha, 1 beta, 1 beta' and 1 omega subunit. When a sigma factor is associated with the core the holoenzyme is formed, which can initiate transcription.

The enzyme catalyses RNA(n) + a ribonucleoside 5'-triphosphate = RNA(n+1) + diphosphate. Functionally, DNA-dependent RNA polymerase catalyzes the transcription of DNA into RNA using the four ribonucleoside triphosphates as substrates. This chain is DNA-directed RNA polymerase subunit beta, found in Legionella pneumophila subsp. pneumophila (strain Philadelphia 1 / ATCC 33152 / DSM 7513).